A 257-amino-acid polypeptide reads, in one-letter code: Transmembrane protein C257L (257 aa).

2 helical membrane-spanning segments follow: residues 123–143 (LELLGYSPTPIIGGDFMFTAL) and 163–183 (MMIFFLIILLCVILGIFYVLV).

Belongs to the asfivirus C257R family.

The protein localises to the host membrane. It is found in the virion. This chain is Transmembrane protein C257L, found in African swine fever virus (isolate Warthog/Namibia/Wart80/1980) (ASFV).